The sequence spans 245 residues: 5-oxoprolinase subunit A (245 aa).

This sequence belongs to the LamB/PxpA family. In terms of assembly, forms a complex composed of PxpA, PxpB and PxpC.

The catalysed reaction is 5-oxo-L-proline + ATP + 2 H2O = L-glutamate + ADP + phosphate + H(+). Catalyzes the cleavage of 5-oxoproline to form L-glutamate coupled to the hydrolysis of ATP to ADP and inorganic phosphate. The sequence is that of 5-oxoprolinase subunit A from Haemophilus influenzae (strain PittGG).